We begin with the raw amino-acid sequence, 274 residues long: NADPH-dependent 7-cyano-7-deazaguanine reductase (274 aa).

Residue 80–82 (VES) participates in substrate binding. 82–83 (SK) contributes to the NADPH binding site. Catalysis depends on Cys-181, which acts as the Thioimide intermediate. Catalysis depends on Asp-188, which acts as the Proton donor. Residue 220–221 (HE) coordinates substrate. 249–250 (RG) contacts NADPH.

It belongs to the GTP cyclohydrolase I family. QueF type 2 subfamily. Homodimer.

The protein resides in the cytoplasm. It carries out the reaction 7-aminomethyl-7-carbaguanine + 2 NADP(+) = 7-cyano-7-deazaguanine + 2 NADPH + 3 H(+). Its pathway is tRNA modification; tRNA-queuosine biosynthesis. Functionally, catalyzes the NADPH-dependent reduction of 7-cyano-7-deazaguanine (preQ0) to 7-aminomethyl-7-deazaguanine (preQ1). This Burkholderia ambifaria (strain ATCC BAA-244 / DSM 16087 / CCUG 44356 / LMG 19182 / AMMD) (Burkholderia cepacia (strain AMMD)) protein is NADPH-dependent 7-cyano-7-deazaguanine reductase.